Reading from the N-terminus, the 107-residue chain is uncharacterized protein (107 aa).

A helical membrane pass occupies residues 37-59 (MVFSFLTVMPGDFIKCLFLRFFV).

It is found in the membrane. This is an uncharacterized protein from Saccharomyces cerevisiae (strain ATCC 204508 / S288c) (Baker's yeast).